Reading from the N-terminus, the 269-residue chain is Short-chain dehydrogenase/reductase ABA4 (269 aa).

The NADP(+) site is built by isoleucine 34, aspartate 80, arginine 144, tyrosine 174, lysine 178, isoleucine 207, and threonine 209. Tyrosine 174 acts as the Proton donor in catalysis. Lysine 178 functions as the Lowers pKa of active site Tyr in the catalytic mechanism.

The protein belongs to the short-chain dehydrogenases/reductases (SDR) family.

It participates in hormone biosynthesis. Short-chain dehydrogenase/reductase involved in the biosynthesis of abscisic acid (ABA), a phytohormone that acts antagonistically toward salicylic acid (SA), jasmonic acid (JA) and ethylene (ETH) signaling, to impede plant defense responses. During pathogen-host interaction, ABA plays a dual role in disease severity by increasing plant susceptibility and accelerating pathogenesis in the fungus itself. The first step of the pathway catalyzes the reaction from farnesyl diphosphate to alpha-ionylideneethane performed by the alpha-ionylideneethane synthase ABA3 via a three-step reaction mechanism involving 2 neutral intermediates, beta-farnesene and allofarnesene. The cytochrome P450 monooxygenase ABA1 might then be involved in the conversion of alpha-ionylideneethane to alpha-ionylideneacetic acid. Alpha-ionylideneacetic acid is further converted to abscisic acid in 2 steps involving the cytochrome P450 monooxygenase ABA2 and the short-chain dehydrogenase/reductase ABA4, via the intermediates 1'-deoxy-ABA or 1',4'-trans-diol-ABA, depending on the order of action of these 2 enzymes. ABA2 is responsible for the hydroxylation of carbon atom C-1' and ABA4 might be involved in the oxidation of the C-4' carbon atom. The protein is Short-chain dehydrogenase/reductase ABA4 (ABA4) of Pyricularia oryzae (strain Y34) (Rice blast fungus).